A 199-amino-acid polypeptide reads, in one-letter code: Recombination protein RecR (199 aa).

A C4-type zinc finger spans residues 57-72 (CSICGNITDKDPCYVC). Residues 80–176 (TIVCVVQDSR…RVTRIAHGLP (97 aa)) enclose the Toprim domain.

The protein belongs to the RecR family.

Its function is as follows. May play a role in DNA repair. It seems to be involved in an RecBC-independent recombinational process of DNA repair. It may act with RecF and RecO. This chain is Recombination protein RecR, found in Exiguobacterium sibiricum (strain DSM 17290 / CCUG 55495 / CIP 109462 / JCM 13490 / 255-15).